The primary structure comprises 300 residues: Transcription elongation factor A protein 2 (300 aa).

The 78-residue stretch at 6–83 (EEIARIARRL…KSWKKLLDAS (78 aa)) folds into the TFIIS N-terminal domain. Lys58 participates in a covalent cross-link: Glycyl lysine isopeptide (Lys-Gly) (interchain with G-Cter in ubiquitin). Phosphoserine is present on residues Ser60 and Ser101. Positions 84–131 (DAKARERRRGGSLPTSSSKEASEAQDPSRKRPELPRMPSTPRITTFPP) are disordered. Positions 103–117 (EASEAQDPSRKRPEL) are enriched in basic and acidic residues. The 117-residue stretch at 139-255 (VRTKCREMLT…EHQMARTGGT (117 aa)) folds into the TFIIS central domain. The TFIIS-type zinc finger occupies 258–298 (DLFTCGKCRKKNCTYTQVQTRSSDEPMTTFVVCNECGNRWK). Zn(2+) contacts are provided by Cys262, Cys265, Cys290, and Cys293.

Belongs to the TFS-II family. Interacts with the basal transcription factor GTF2B. Interacts with REXO1.

It localises to the nucleus. Necessary for efficient RNA polymerase II transcription elongation past template-encoded arresting sites. The arresting sites in DNA have the property of trapping a certain fraction of elongating RNA polymerases that pass through, resulting in locked ternary complexes. Cleavage of the nascent transcript by S-II allows the resumption of elongation from the new 3'-terminus. In Bos taurus (Bovine), this protein is Transcription elongation factor A protein 2 (TCEA2).